The primary structure comprises 318 residues: tRNA dimethylallyltransferase (318 aa).

Position 16-23 (16-23 (GPTASGKS)) interacts with ATP. 18 to 23 (TASGKS) contributes to the substrate binding site. 2 interaction with substrate tRNA regions span residues 41-44 (DSRQ) and 165-169 (QRLIR).

This sequence belongs to the IPP transferase family. Monomer. The cofactor is Mg(2+).

It carries out the reaction adenosine(37) in tRNA + dimethylallyl diphosphate = N(6)-dimethylallyladenosine(37) in tRNA + diphosphate. Catalyzes the transfer of a dimethylallyl group onto the adenine at position 37 in tRNAs that read codons beginning with uridine, leading to the formation of N6-(dimethylallyl)adenosine (i(6)A). This chain is tRNA dimethylallyltransferase, found in Pelodictyon phaeoclathratiforme (strain DSM 5477 / BU-1).